The primary structure comprises 429 residues: 3-phosphoshikimate 1-carboxyvinyltransferase (429 aa).

3-phosphoshikimate contacts are provided by Lys23, Ser24, and Arg28. Lys23 is a phosphoenolpyruvate binding site. Phosphoenolpyruvate contacts are provided by Gly95 and Arg123. Ser168, Gln170, Asp316, and Lys343 together coordinate 3-phosphoshikimate. Phosphoenolpyruvate is bound at residue Gln170. Asp316 (proton acceptor) is an active-site residue. The phosphoenolpyruvate site is built by Arg347 and Arg389.

Belongs to the EPSP synthase family. Monomer.

It localises to the cytoplasm. The enzyme catalyses 3-phosphoshikimate + phosphoenolpyruvate = 5-O-(1-carboxyvinyl)-3-phosphoshikimate + phosphate. Its pathway is metabolic intermediate biosynthesis; chorismate biosynthesis; chorismate from D-erythrose 4-phosphate and phosphoenolpyruvate: step 6/7. Catalyzes the transfer of the enolpyruvyl moiety of phosphoenolpyruvate (PEP) to the 5-hydroxyl of shikimate-3-phosphate (S3P) to produce enolpyruvyl shikimate-3-phosphate and inorganic phosphate. This Bacillus anthracis (strain A0248) protein is 3-phosphoshikimate 1-carboxyvinyltransferase.